Here is a 629-residue protein sequence, read N- to C-terminus: ATP-dependent RNA helicase DeaD (629 aa).

A Q motif motif is present at residues 6 to 34 (TTFADLGLKAPILEALNDLGYEKPSPIQA). Residues 37–208 (IPHLLNGRDV…RRFMKEPQEV (172 aa)) form the Helicase ATP-binding domain. Residue 50 to 57 (AQTGSGKT) participates in ATP binding. A DEAD box motif is present at residues 156-159 (DEAD). The 148-residue stretch at 232–379 (KNEALVRFLE…EVELPNAELL (148 aa)) folds into the Helicase C-terminal domain. Disordered regions lie at residues 438 to 481 (LIVP…RERR) and 560 to 629 (LGDA…GGDA). 2 stretches are compositionally biased toward basic and acidic residues: residues 446 to 481 (MRPKREFRDRDDRGPRDRNDRGPRGDREDRPRRERR) and 568 to 629 (GGER…GGDA).

This sequence belongs to the DEAD box helicase family. DeaD/CsdA subfamily. Interacts with the 50S ribosomal subunit upon shifting to 15 degrees Celsius. Also found associated with the RNA degradosome at 15 degrees Celsius; binds RNase E (rne).

It localises to the cytoplasm. It catalyses the reaction ATP + H2O = ADP + phosphate + H(+). DEAD-box RNA helicase involved in various cellular processes at low temperature, including ribosome biogenesis, mRNA degradation and translation initiation. Exhibits RNA-stimulated ATP hydrolysis and RNA unwinding activity at low temperature. Involved in 50S ribosomal subunit assembly, acting after SrmB, and could also play a role in the biogenesis of the 30S ribosomal subunit. In addition, is involved in mRNA decay, via formation of a cold-shock degradosome with RNase E. Also stimulates translation of some mRNAs, probably at the level of initiation. The sequence is that of ATP-dependent RNA helicase DeaD from Escherichia coli (strain K12).